A 201-amino-acid polypeptide reads, in one-letter code: Small ribosomal subunit protein uS5 (201 aa).

The tract at residues 1-28 is disordered; sequence MAGPQRRGSGAGGGERRDRKGRDGGAGA. Over residues 14–23 the composition is skewed to basic and acidic residues; sequence GERRDRKGRD. The region spanning 34–97 is the S5 DRBM domain; that stretch reads YVERVVAINR…EEAKKHFFKV (64 aa).

This sequence belongs to the universal ribosomal protein uS5 family. Part of the 30S ribosomal subunit. Contacts proteins S4 and S8.

With S4 and S12 plays an important role in translational accuracy. Functionally, located at the back of the 30S subunit body where it stabilizes the conformation of the head with respect to the body. This chain is Small ribosomal subunit protein uS5, found in Streptomyces coelicolor (strain ATCC BAA-471 / A3(2) / M145).